We begin with the raw amino-acid sequence, 416 residues long: D-amino acid dehydrogenase (416 aa).

An FAD-binding site is contributed by 3–17 (ITILGSGVIGVTTAY).

Belongs to the DadA oxidoreductase family. It depends on FAD as a cofactor.

It carries out the reaction a D-alpha-amino acid + A + H2O = a 2-oxocarboxylate + AH2 + NH4(+). It participates in amino-acid degradation; D-alanine degradation; NH(3) and pyruvate from D-alanine: step 1/1. Its function is as follows. Oxidative deamination of D-amino acids. This chain is D-amino acid dehydrogenase, found in Brucella anthropi (strain ATCC 49188 / DSM 6882 / CCUG 24695 / JCM 21032 / LMG 3331 / NBRC 15819 / NCTC 12168 / Alc 37) (Ochrobactrum anthropi).